The chain runs to 1070 residues: Protocadherin-8 (1070 aa).

Positions 1–29 (MSPAKRWGSPCLFPLQLFSLCWVLSVAQS) are cleaved as a signal peptide. Cadherin domains are found at residues 30 to 135 (KTVR…APRF), 136 to 245 (PRAQ…SPAF), 247 to 354 (QGAV…APEI), 393 to 497 (QEAG…APIF), 498 to 609 (TKPV…SPIL), and 615 to 721 (ANGS…VPAS). Topologically, residues 30 to 747 (KTVRYSTFEE…SGPSLQWDTP (718 aa)) are extracellular. The N-linked (GlcNAc...) asparagine glycan is linked to N616. The segment covering 716–725 (SAVPASSGSP) has biased composition (low complexity). The segment at 716–740 (SAVPASSGSPEHSRPPGSRLAPSGP) is disordered. The helical transmembrane segment at 748 to 768 (LIVIIVLAGSCTLLLAAIIAI) threads the bilayer. The Cytoplasmic segment spans residues 769 to 1070 (ATTCNRRKKE…SPKKGINENV (302 aa)). Disordered regions lie at residues 777–859 (KEVR…TGES), 906–928 (REAE…DSDS), and 1046–1070 (IGVP…NENV). 2 stretches are compositionally biased toward basic and acidic residues: residues 780 to 790 (RKGGALREERP) and 906 to 921 (REAE…KGDS). At S1053 the chain carries Phosphoserine.

In terms of assembly, the N-terminal extracellular domain forms homophilic interactions; these interactions activate p38 MAPK via TAOK2 and trigger endocytosis. Interacts with CDH2; this interaction may lead to CDH2 cointernalization. Interacts with CDH11. Interacts with TAOK2.

It localises to the cell membrane. The protein localises to the cell projection. It is found in the dendrite. The protein resides in the presynaptic cell membrane. Its subcellular location is the postsynaptic cell membrane. Calcium-dependent cell-adhesion protein. May play a role in activity-induced synaptic reorganization underlying long term memory. Could be involved in CDH2 internalization through TAOK2/p38 MAPK pathway. In hippocampal neurons, may play a role in the down-regulation of dendritic spines, maybe through its action on CDH2 endocytosis. This chain is Protocadherin-8 (Pcdh8), found in Mus musculus (Mouse).